Reading from the N-terminus, the 141-residue chain is ATP synthase epsilon chain (141 aa).

Belongs to the ATPase epsilon chain family. As to quaternary structure, F-type ATPases have 2 components, CF(1) - the catalytic core - and CF(0) - the membrane proton channel. CF(1) has five subunits: alpha(3), beta(3), gamma(1), delta(1), epsilon(1). CF(0) has three main subunits: a, b and c.

Its subcellular location is the cell membrane. In terms of biological role, produces ATP from ADP in the presence of a proton gradient across the membrane. The protein is ATP synthase epsilon chain of Natranaerobius thermophilus (strain ATCC BAA-1301 / DSM 18059 / JW/NM-WN-LF).